Reading from the N-terminus, the 397-residue chain is Phosphoglycerate kinase (397 aa).

Substrate is bound by residues 21–23, arginine 36, 59–62, arginine 119, and arginine 152; these read DVN and HFGR. Residues lysine 202, glutamate 324, and 354–357 contribute to the ATP site; that span reads GGDT.

Belongs to the phosphoglycerate kinase family. As to quaternary structure, monomer.

The protein resides in the cytoplasm. It catalyses the reaction (2R)-3-phosphoglycerate + ATP = (2R)-3-phospho-glyceroyl phosphate + ADP. It participates in carbohydrate degradation; glycolysis; pyruvate from D-glyceraldehyde 3-phosphate: step 2/5. The protein is Phosphoglycerate kinase of Cereibacter sphaeroides (strain KD131 / KCTC 12085) (Rhodobacter sphaeroides).